Consider the following 871-residue polypeptide: Translation initiation factor IF-2 (871 aa).

Disordered regions lie at residues 60-101 and 184-203; these read KKNI…QEVK and ESLKKKKKEKKSFVASKKES. Positions 61–72 are enriched in basic residues; it reads KNIKTPTAKKPK. The span at 73-101 shows a compositional bias: basic and acidic residues; the sequence is KENIKEQEKLNESEKKEPKKEEKLKQEVK. A tr-type G domain is found at 370 to 537; it reads TRAPVITIMG…IVLLQADILE (168 aa). The segment at 379–386 is G1; that stretch reads GHVDHGKT. 379-386 contributes to the GTP binding site; the sequence is GHVDHGKT. A G2 region spans residues 404–408; the sequence is GITQH. Residues 425–428 form a G3 region; sequence DTPG. Residues 425 to 429 and 479 to 482 each bind GTP; these read DTPGH and NKMD. The tract at residues 479 to 482 is G4; the sequence is NKMD. The segment at 515 to 517 is G5; sequence SAK.

This sequence belongs to the TRAFAC class translation factor GTPase superfamily. Classic translation factor GTPase family. IF-2 subfamily.

Its subcellular location is the cytoplasm. In terms of biological role, one of the essential components for the initiation of protein synthesis. Protects formylmethionyl-tRNA from spontaneous hydrolysis and promotes its binding to the 30S ribosomal subunits. Also involved in the hydrolysis of GTP during the formation of the 70S ribosomal complex. This Campylobacter jejuni subsp. jejuni serotype O:23/36 (strain 81-176) protein is Translation initiation factor IF-2.